The sequence spans 260 residues: MRKDPLVIAGREYQSRLLVGTGKYKDFAETRAAIDAAGAEIVTVALRRMNLGQSKDAPNLLEFLPADRFTILPNTAGCYTAEDAVRTCRLARELGDWKLVKLEVIGDPQTLYPDMRQTYDAAKTLIAEGFEVMVYSVDDPVACKTFAEMGCVAVMPLAAPIGSGLGIRNPYNLRIILEQATVPILVDAGVGTASDVAVALELGCDGVLLNTAIAAAKDPILMAEAMRQGVEAGRKAFLAGRMPRKLYASASSPVDGLFFE.

Lysine 101 acts as the Schiff-base intermediate with DXP in catalysis. Residues glycine 162, 188–189, and 210–211 contribute to the 1-deoxy-D-xylulose 5-phosphate site; these read AG and NT.

This sequence belongs to the ThiG family. In terms of assembly, homotetramer. Forms heterodimers with either ThiH or ThiS.

The protein localises to the cytoplasm. The enzyme catalyses [ThiS sulfur-carrier protein]-C-terminal-Gly-aminoethanethioate + 2-iminoacetate + 1-deoxy-D-xylulose 5-phosphate = [ThiS sulfur-carrier protein]-C-terminal Gly-Gly + 2-[(2R,5Z)-2-carboxy-4-methylthiazol-5(2H)-ylidene]ethyl phosphate + 2 H2O + H(+). It functions in the pathway cofactor biosynthesis; thiamine diphosphate biosynthesis. Its function is as follows. Catalyzes the rearrangement of 1-deoxy-D-xylulose 5-phosphate (DXP) to produce the thiazole phosphate moiety of thiamine. Sulfur is provided by the thiocarboxylate moiety of the carrier protein ThiS. In vitro, sulfur can be provided by H(2)S. In Acidithiobacillus ferrooxidans (strain ATCC 23270 / DSM 14882 / CIP 104768 / NCIMB 8455) (Ferrobacillus ferrooxidans (strain ATCC 23270)), this protein is Thiazole synthase.